The following is a 630-amino-acid chain: 1-deoxy-D-xylulose-5-phosphate synthase (630 aa).

Thiamine diphosphate is bound by residues histidine 72 and 113 to 115 (GHS). Residue aspartate 144 participates in Mg(2+) binding. Thiamine diphosphate contacts are provided by residues 145 to 146 (GA), asparagine 173, tyrosine 284, and glutamate 367. Asparagine 173 is a binding site for Mg(2+).

Belongs to the transketolase family. DXPS subfamily. In terms of assembly, homodimer. The cofactor is Mg(2+). It depends on thiamine diphosphate as a cofactor.

The catalysed reaction is D-glyceraldehyde 3-phosphate + pyruvate + H(+) = 1-deoxy-D-xylulose 5-phosphate + CO2. It functions in the pathway metabolic intermediate biosynthesis; 1-deoxy-D-xylulose 5-phosphate biosynthesis; 1-deoxy-D-xylulose 5-phosphate from D-glyceraldehyde 3-phosphate and pyruvate: step 1/1. In terms of biological role, catalyzes the acyloin condensation reaction between C atoms 2 and 3 of pyruvate and glyceraldehyde 3-phosphate to yield 1-deoxy-D-xylulose-5-phosphate (DXP). The sequence is that of 1-deoxy-D-xylulose-5-phosphate synthase from Geobacillus sp. (strain WCH70).